The following is a 125-amino-acid chain: Sulfiredoxin, chloroplastic/mitochondrial (125 aa).

A chloroplast and mitochondrion-targeting transit peptide spans 1–22 (MANLMMRLPISLRSFSVSASSS).

This sequence belongs to the sulfiredoxin family. As to expression, low expression in photosynthetic tissues such as leaves and sepals.

Its subcellular location is the plastid. It is found in the chloroplast. The protein localises to the mitochondrion. The catalysed reaction is S-hydroxy-S-oxy-L-cysteinyl-[peroxiredoxin] + [protein]-dithiol + ATP = S-hydroxy-L-cysteinyl-[peroxiredoxin] + [protein]-disulfide + ADP + phosphate. Contributes to oxidative stress resistance by reducing cysteine-sulfinic acid formed under exposure to oxidants in a peroxiredoxin. May catalyze the reduction in a multi-step process by acting both as a specific phosphotransferase and a thioltransferase. Required to switch on the antioxidant pathway to regenerate the oxidative damage. In mitochondrion, catalyzes the retroreduction of the inactive sulfinic form of atypical Prx IIF using thioredoxin as reducing agent. This is Sulfiredoxin, chloroplastic/mitochondrial (SRX) from Arabidopsis thaliana (Mouse-ear cress).